The sequence spans 580 residues: Xylulose kinase (580 aa).

H99, R170, D280, and N281 together coordinate substrate. Residues W355, 441–442 (GA), and N445 contribute to the ATP site.

The protein belongs to the FGGY kinase family. As to quaternary structure, monomer.

It carries out the reaction D-xylulose + ATP = D-xylulose 5-phosphate + ADP + H(+). In terms of biological role, phosphorylates D-xylulose to produce D-xylulose 5-phosphate, a molecule that may play an important role in the regulation of glucose metabolism and lipogenesis. The chain is Xylulose kinase (XYLB) from Pongo abelii (Sumatran orangutan).